Reading from the N-terminus, the 219-residue chain is Vesicle-associated membrane protein 721 (219 aa).

The Cytoplasmic segment spans residues 1 to 196 (MAQQSLIYSF…MWLQNMKIKL (196 aa)). One can recognise a Longin domain in the interval 10 to 114 (FVARGTVILV…SLNKEFGSKL (105 aa)). The v-SNARE coiled-coil homology domain occupies 130–190 (KLAKVKAQVS…TQMRRKMWLQ (61 aa)). The chain crosses the membrane as a helical; Anchor for type IV membrane protein span at residues 197–217 (IVLAIIIALILIIVLSVCHGF). The Vesicular segment spans residues 218 to 219 (KC).

It belongs to the synaptobrevin family. Expressed in flowers, leaves, stems and roots.

It localises to the cell membrane. The protein resides in the early endosome membrane. Functionally, involved in the targeting and/or fusion of transport vesicles to their target membrane. The sequence is that of Vesicle-associated membrane protein 721 from Arabidopsis thaliana (Mouse-ear cress).